A 516-amino-acid polypeptide reads, in one-letter code: Maturase K (516 aa).

The protein belongs to the intron maturase 2 family. MatK subfamily.

The protein resides in the plastid. Its subcellular location is the chloroplast. Functionally, usually encoded in the trnK tRNA gene intron. Probably assists in splicing its own and other chloroplast group II introns. In Cypripedium calceolus (Yellow lady's slipper), this protein is Maturase K.